Consider the following 811-residue polypeptide: RFX-like DNA-binding protein RFX1 (811 aa).

2 disordered regions span residues 48-92 and 111-156; these read EPTS…TYLP and LLHQ…QRQP. Residues 51–70 show a composition bias toward low complexity; the sequence is SRGSNDNSNGPSNGSSVNSN. Pro residues predominate over residues 140 to 149; the sequence is SPTPTQPPAQ. Ser-173 bears the Phosphoserine mark. The interval 181–222 is disordered; that stretch reads KSEETLNNNPPTAAKRTNTFPSIPSSTKKQKTSQEKRISSIS. Over residues 185–204 the composition is skewed to polar residues; the sequence is TLNNNPPTAAKRTNTFPSIP. A DNA-binding region (RFX-type winged-helix) is located at residues 285 to 360; it reads ALLWLMKNCK…YHYCGLKLTV (76 aa). Residues 377-391 are compositionally biased toward low complexity; the sequence is LVHNNDPISPLSSPS. Residues 377-461 are disordered; sequence LVHNNDPISP…AANNPTGTLS (85 aa). A compositionally biased stretch (polar residues) spans 409–428; that stretch reads NRKSLSRTGSPVKQSSNDNP. A compositionally biased stretch (basic and acidic residues) spans 434-445; it reads ESQHPNETEANK.

Belongs to the RFX family.

This Saccharomyces cerevisiae (strain ATCC 204508 / S288c) (Baker's yeast) protein is RFX-like DNA-binding protein RFX1 (RFX1).